The following is a 483-amino-acid chain: Bifunctional protein HldE (483 aa).

A ribokinase region spans residues 1–327 (MDDALAHLPR…ACASSAQGEP (327 aa)). 201-204 (NRKE) lines the ATP pocket. D272 is an active-site residue. Residues 354–483 (FTNGCFDLLH…TTNLIARMNS (130 aa)) form a cytidylyltransferase region.

This sequence in the N-terminal section; belongs to the carbohydrate kinase PfkB family. In the C-terminal section; belongs to the cytidylyltransferase family. Homodimer.

The catalysed reaction is D-glycero-beta-D-manno-heptose 7-phosphate + ATP = D-glycero-beta-D-manno-heptose 1,7-bisphosphate + ADP + H(+). It carries out the reaction D-glycero-beta-D-manno-heptose 1-phosphate + ATP + H(+) = ADP-D-glycero-beta-D-manno-heptose + diphosphate. The protein operates within nucleotide-sugar biosynthesis; ADP-L-glycero-beta-D-manno-heptose biosynthesis; ADP-L-glycero-beta-D-manno-heptose from D-glycero-beta-D-manno-heptose 7-phosphate: step 1/4. Its pathway is nucleotide-sugar biosynthesis; ADP-L-glycero-beta-D-manno-heptose biosynthesis; ADP-L-glycero-beta-D-manno-heptose from D-glycero-beta-D-manno-heptose 7-phosphate: step 3/4. Functionally, catalyzes the phosphorylation of D-glycero-D-manno-heptose 7-phosphate at the C-1 position to selectively form D-glycero-beta-D-manno-heptose-1,7-bisphosphate. In terms of biological role, catalyzes the ADP transfer from ATP to D-glycero-beta-D-manno-heptose 1-phosphate, yielding ADP-D-glycero-beta-D-manno-heptose. This chain is Bifunctional protein HldE, found in Caulobacter vibrioides (strain ATCC 19089 / CIP 103742 / CB 15) (Caulobacter crescentus).